A 409-amino-acid polypeptide reads, in one-letter code: Accessory Sec system protein translocase subunit SecY2 (409 aa).

A run of 10 helical transmembrane segments spans residues 16–36, 61–81, 104–124, 132–152, 161–181, 190–210, 242–262, 286–306, 341–361, and 374–394; these read ILIT…PIPG, LSQV…MILL, VVML…FQYH, LLLA…IGNL, MTIL…PLIF, LAII…ITFE, GMAF…IILL, GVVI…FVNI, LFGT…LLFA, and TGIF…FQVI.

The protein belongs to the SecY/SEC61-alpha family. SecY2 subfamily. Component of the accessory SecA2/SecY2 protein translocase complex required to export cell wall proteins. May form heterotrimers with SecE and SecG subunits.

It localises to the cell membrane. Part of the accessory SecA2/SecY2 system specifically required for export of possible cell wall proteins. The central subunit of a protein translocation channel. This is Accessory Sec system protein translocase subunit SecY2 from Streptococcus agalactiae serotype Ia (strain ATCC 27591 / A909 / CDC SS700).